Consider the following 245-residue polypeptide: NAD-dependent protein deacetylase (245 aa).

The region spanning 1–245 (MIFVQQFEEV…EFVEGLSSMK (245 aa)) is the Deacetylase sirtuin-type domain. Residues Ala-26, Thr-30, Phe-37, Arg-38, Gln-105, Ile-107, Asp-108, and His-123 each coordinate NAD(+). Residue Phe-37 participates in nicotinamide binding. Nicotinamide is bound by residues Ile-107 and Asp-108. The active-site Proton acceptor is His-123. The Zn(2+) site is built by Cys-131, Cys-134, Cys-151, and Cys-154. Positions 190, 191, 216, and 234 each coordinate NAD(+).

It belongs to the sirtuin family. Class U subfamily. Requires Zn(2+) as cofactor.

The protein localises to the cytoplasm. It carries out the reaction N(6)-acetyl-L-lysyl-[protein] + NAD(+) + H2O = 2''-O-acetyl-ADP-D-ribose + nicotinamide + L-lysyl-[protein]. Functionally, NAD-dependent protein deacetylase which modulates the activities of several enzymes which are inactive in their acetylated form. In Bacillus cereus (strain ATCC 14579 / DSM 31 / CCUG 7414 / JCM 2152 / NBRC 15305 / NCIMB 9373 / NCTC 2599 / NRRL B-3711), this protein is NAD-dependent protein deacetylase.